A 934-amino-acid polypeptide reads, in one-letter code: Aconitate hydratase A (934 aa).

The segment at glutamate 398–asparagine 454 is disordered. Basic and acidic residues predominate over residues leucine 404 to glutamate 420. The span at serine 427 to serine 445 shows a compositional bias: low complexity. [4Fe-4S] cluster contacts are provided by cysteine 473, cysteine 539, and cysteine 542.

The protein belongs to the aconitase/IPM isomerase family. Monomer. [4Fe-4S] cluster is required as a cofactor.

The catalysed reaction is citrate = D-threo-isocitrate. The enzyme catalyses (2S,3R)-3-hydroxybutane-1,2,3-tricarboxylate = 2-methyl-cis-aconitate + H2O. It participates in carbohydrate metabolism; tricarboxylic acid cycle; isocitrate from oxaloacetate: step 2/2. The protein operates within organic acid metabolism; propanoate degradation. Involved in the catabolism of short chain fatty acids (SCFA) via the tricarboxylic acid (TCA)(acetyl degradation route) and probably via the 2-methylcitrate cycle I (propionate degradation route). Catalyzes the reversible isomerization of citrate to isocitrate via cis-aconitate. Could catalyze the hydration of 2-methyl-cis-aconitate to yield (2R,3S)-2-methylisocitrate. The apo form of AcnA functions as a RNA-binding regulatory protein. This is Aconitate hydratase A (acn) from Corynebacterium diphtheriae (strain ATCC 700971 / NCTC 13129 / Biotype gravis).